The chain runs to 514 residues: Type-2 serine--tRNA ligase (514 aa).

Ala313 contacts L-serine. Cys315 provides a ligand contact to Zn(2+). L-serine is bound at residue Arg344. ATP-binding positions include 344-346 (RWE) and 355-356 (RV). 361–363 (RGE) is a binding site for L-serine. Positions 363 and 470 each coordinate Zn(2+). Residue Arg477 coordinates ATP.

It belongs to the class-II aminoacyl-tRNA synthetase family. Type-2 seryl-tRNA synthetase subfamily. Homodimer. The cofactor is Zn(2+).

The protein resides in the cytoplasm. The catalysed reaction is tRNA(Ser) + L-serine + ATP = L-seryl-tRNA(Ser) + AMP + diphosphate + H(+). It catalyses the reaction tRNA(Sec) + L-serine + ATP = L-seryl-tRNA(Sec) + AMP + diphosphate + H(+). It functions in the pathway aminoacyl-tRNA biosynthesis; selenocysteinyl-tRNA(Sec) biosynthesis; L-seryl-tRNA(Sec) from L-serine and tRNA(Sec): step 1/1. In terms of biological role, catalyzes the attachment of serine to tRNA(Ser). Is also able to aminoacylate tRNA(Sec) with serine, to form the misacylated tRNA L-seryl-tRNA(Sec), which will be further converted into selenocysteinyl-tRNA(Sec). The chain is Type-2 serine--tRNA ligase from Methanococcus maripaludis (strain C6 / ATCC BAA-1332).